A 312-amino-acid polypeptide reads, in one-letter code: MMKNPLAVSIPGLTLKNPIIPASGCFGFGEEYANYYDLDQLGSIMIKATTPQARYGNPTPRVAETPSGMLNAIGLQNPGLDVVMQEKLPKLEKYPNLPIIANVAGACEEDYVAVCAKIGQAPNVKAIELNISCPNVKHGGIAFGTDPEVAFQLTQAVKKVASVPIYVKLSPNVTDIVPIAQAIEAGGADGFSMINTLLGMRIDLKTRKPILANQTGGLSGPAIKPVAIRLIRQVASVSQLPIIGMGGVQTVDDVLEMFMAGASAVGVGTANFTDPYICPKLIDGLPKRMEELGIESLEQLIKEVREGQQNAR.

FMN is bound by residues S23 and 47–48 (KA). Residues K47 and 71 to 75 (NAIGL) each bind substrate. Residues N102 and N130 each contribute to the FMN site. N130 serves as a coordination point for substrate. Catalysis depends on C133, which acts as the Nucleophile. 2 residues coordinate FMN: K168 and I194. 195–196 (NT) serves as a coordination point for substrate. FMN-binding positions include G220, 246–247 (GG), and 268–269 (GT).

This sequence belongs to the dihydroorotate dehydrogenase family. Type 1 subfamily. As to quaternary structure, heterotetramer of 2 PyrK and 2 PyrD type B subunits. FMN serves as cofactor.

It is found in the cytoplasm. The catalysed reaction is (S)-dihydroorotate + NAD(+) = orotate + NADH + H(+). Its pathway is pyrimidine metabolism; UMP biosynthesis via de novo pathway; orotate from (S)-dihydroorotate (NAD(+) route): step 1/1. In terms of biological role, catalyzes the conversion of dihydroorotate to orotate with NAD(+) as electron acceptor. The sequence is that of Dihydroorotate dehydrogenase B (NAD(+)), catalytic subunit (pyrDB) from Enterococcus faecalis (strain ATCC 47077 / OG1RF).